The following is a 117-amino-acid chain: Ig heavy chain V region MOPC 104E (117 aa).

The 116-residue stretch at 1-116 folds into the Ig-like domain; sequence EVQLQQSGPE…WGAGTTVTVS (116 aa). Cys-22 and Cys-96 form a disulfide bridge. N-linked (GlcNAc...) (high mannose) asparagine; atypical glycosylation occurs at Asn-55.

The chain is Ig heavy chain V region MOPC 104E from Mus musculus (Mouse).